The sequence spans 509 residues: Dol-P-Glc:Glc(2)Man(9)GlcNAc(2)-PP-Dol alpha-1,2-glucosyltransferase (509 aa).

At Met-1–Leu-4 the chain is on the cytoplasmic side. Residues Ala-5–Val-25 traverse the membrane as a helical segment. Topologically, residues Pro-26–Pro-57 are lumenal. A helical membrane pass occupies residues Pro-58–Met-78. The Cytoplasmic segment spans residues Glu-79–Ala-99. Residues Val-100–Leu-120 form a helical membrane-spanning segment. Over Ser-121–Lys-124 the chain is Lumenal. Residues Ala-125–Tyr-145 form a helical membrane-spanning segment. The Cytoplasmic segment spans residues Tyr-146–Ser-170. The helical transmembrane segment at Ala-171–Val-191 threads the bilayer. At Ala-192 to Pro-285 the chain is on the lumenal side. The interval Gln-210–Ser-254 is disordered. Composition is skewed to polar residues over residues Glu-215–Ser-229 and Ser-239–Ser-254. A helical transmembrane segment spans residues Phe-286–Gly-306. Residues Ala-307–His-311 lie on the Cytoplasmic side of the membrane. The helical transmembrane segment at Val-312–Ala-332 threads the bilayer. Residues Pro-333–Ser-355 are Lumenal-facing. The N-linked (GlcNAc...) asparagine glycan is linked to Asn-351. A helical membrane pass occupies residues Leu-356–Ala-376. The Cytoplasmic portion of the chain corresponds to His-377 to Trp-400. A helical transmembrane segment spans residues Leu-401–Leu-421. The Lumenal portion of the chain corresponds to Ala-422 to Thr-428. A helical membrane pass occupies residues Trp-429–Phe-449. The Cytoplasmic portion of the chain corresponds to Arg-450–Thr-472. A helical membrane pass occupies residues Trp-473–Phe-493. Residues Arg-494–Trp-509 are Lumenal-facing.

The protein belongs to the ALG10 glucosyltransferase family.

The protein localises to the endoplasmic reticulum membrane. It carries out the reaction an alpha-D-Glc-(1-&gt;3)-alpha-D-Glc-(1-&gt;3)-alpha-D-Man-(1-&gt;2)-alpha-D-Man-(1-&gt;2)-alpha-D-Man-(1-&gt;3)-[alpha-D-Man-(1-&gt;2)-alpha-D-Man-(1-&gt;3)-[alpha-D-Man-(1-&gt;2)-alpha-D-Man-(1-&gt;6)]-alpha-D-Man-(1-&gt;6)]-beta-D-Man-(1-&gt;4)-beta-D-GlcNAc-(1-&gt;4)-alpha-D-GlcNAc-diphospho-di-trans,poly-cis-dolichol + a di-trans,poly-cis-dolichyl beta-D-glucosyl phosphate = a alpha-D-Glc-(1-&gt;2)-alpha-D-Glc-(1-&gt;3)-alpha-D-Glc-(1-&gt;3)-alpha-D-Man-(1-&gt;2)-alpha-D-Man-(1-&gt;2)-alpha-D-Man-(1-&gt;3)-[alpha-D-Man-(1-&gt;2)-alpha-D-Man-(1-&gt;3)-[alpha-D-Man-(1-&gt;2)-alpha-D-Man-(1-&gt;6)]-alpha-D-Man-(1-&gt;6)]-beta-D-Man-(1-&gt;4)-beta-D-GlcNAc-(1-&gt;4)-alpha-D-GlcNAc-diphospho-di-trans,poly-cis-dolichol + a di-trans,poly-cis-dolichyl phosphate + H(+). The protein operates within protein modification; protein glycosylation. In terms of biological role, dol-P-Glc:Glc(2)Man(9)GlcNAc(2)-PP-Dol alpha-1,2-glucosyltransferase that operates in the biosynthetic pathway of dolichol-linked oligosaccharides, the glycan precursors employed in protein asparagine (N)-glycosylation. The assembly of dolichol-linked oligosaccharides begins on the cytosolic side of the endoplasmic reticulum membrane and finishes in its lumen. The sequential addition of sugars to dolichol pyrophosphate produces dolichol-linked oligosaccharides containing fourteen sugars, including two GlcNAcs, nine mannoses and three glucoses. Once assembled, the oligosaccharide is transferred from the lipid to nascent proteins by oligosaccharyltransferases. In the lumen of the endoplasmic reticulum, adds the third and last glucose residue from dolichyl phosphate glucose (Dol-P-Glc) onto the lipid-linked oligosaccharide intermediate Glc(2)Man(9)GlcNAc(2)-PP-Dol to produce Glc(3)Man(9)GlcNAc(2)-PP-Dol. In Arabidopsis thaliana (Mouse-ear cress), this protein is Dol-P-Glc:Glc(2)Man(9)GlcNAc(2)-PP-Dol alpha-1,2-glucosyltransferase.